The sequence spans 172 residues: Centrin-2 (172 aa).

The tract at residues 1–31 is disordered; the sequence is MASNFKKANMASTTQRKRMSPKPELTEEQKQ. A2 carries the post-translational modification N-acetylalanine. The required for self-assembly stretch occupies residues 2 to 25; sequence ASNFKKANMASTTQRKRMSPKPEL. S20 carries the post-translational modification Phosphoserine. A Glycyl lysine isopeptide (Lys-Gly) (interchain with G-Cter in SUMO2) cross-link involves residue K22. The residue at position 26 (T26) is a Phosphothreonine. 4 EF-hand domains span residues 28–63, 64–99, 101–136, and 137–172; these read EQKQ…LGFE, PKKE…KMSE, DTKE…LGEN, and LSDE…TSLY. The Ca(2+) site is built by D41, D43, T45, T47, and E52. Residues D150, D152, D154, E156, and E161 each coordinate Ca(2+).

It belongs to the centrin family. As to quaternary structure, monomer. Homooligomer. Interacts with CCP110, SFI1. Component of the XPC complex composed of XPC, RAD23B and CETN2. Component of the nuclear pore complex (NPC)-associated TREX-2 complex (transcription and export complex 2), composed of at least GANP, 2 copies of ENY2, PCID2, SEM1/DSS1, and either centrin CETN2 or centrin CETN3. The TREX-2 complex also associates with ALYREF/ALY and with the nucleoporin NUP153. Interacts with USP49. Forms a microtubule-associated complex with POC5, POC1B and FAM161A. Interacts with CCDC15.

It localises to the cytoplasm. The protein resides in the cytoskeleton. Its subcellular location is the microtubule organizing center. It is found in the centrosome. The protein localises to the centriole. It localises to the nucleus. The protein resides in the nucleus envelope. Its subcellular location is the nuclear pore complex. Functionally, plays a fundamental role in microtubule organizing center structure and function. Required for centriole duplication and correct spindle formation. Has a role in regulating cytokinesis and genome stability via cooperation with CALM1 and CCP110. Involved in global genome nucleotide excision repair (GG-NER) by acting as component of the XPC complex. Cooperatively with RAD23B appears to stabilize XPC. In vitro, stimulates DNA binding of the XPC:RAD23B dimer. In terms of biological role, the XPC complex is proposed to represent the first factor bound at the sites of DNA damage and together with other core recognition factors, XPA, RPA and the TFIIH complex, is part of the pre-incision (or initial recognition) complex. The XPC complex recognizes a wide spectrum of damaged DNA characterized by distortions of the DNA helix such as single-stranded loops, mismatched bubbles or single-stranded overhangs. The orientation of XPC complex binding appears to be crucial for inducing a productive NER. XPC complex is proposed to recognize and to interact with unpaired bases on the undamaged DNA strand which is followed by recruitment of the TFIIH complex and subsequent scanning for lesions in the opposite strand in a 5'-to-3' direction by the NER machinery. Cyclobutane pyrimidine dimers (CPDs) which are formed upon UV-induced DNA damage esacpe detection by the XPC complex due to a low degree of structural perurbation. Instead they are detected by the UV-DDB complex which in turn recruits and cooperates with the XPC complex in the respective DNA repair. Its function is as follows. As a component of the TREX-2 complex, involved in the export of mRNAs to the cytoplasm through the nuclear pores. This is Centrin-2 (CETN2) from Bos taurus (Bovine).